The sequence spans 377 residues: Alanine racemase, catabolic (377 aa).

The Proton acceptor; specific for D-alanine role is filled by lysine 51. An N6-(pyridoxal phosphate)lysine modification is found at lysine 51. Position 150 (arginine 150) interacts with substrate. The active-site Proton acceptor; specific for L-alanine is the tyrosine 272. Position 320 (methionine 320) interacts with substrate.

Belongs to the alanine racemase family. It depends on pyridoxal 5'-phosphate as a cofactor.

The enzyme catalyses L-alanine = D-alanine. Its function is as follows. Isomerizes L-alanine to D-alanine which is then oxidized to pyruvate by DadA. The chain is Alanine racemase, catabolic (dadX) from Rhizobium johnstonii (strain DSM 114642 / LMG 32736 / 3841) (Rhizobium leguminosarum bv. viciae).